Reading from the N-terminus, the 357-residue chain is D-alanine--D-alanine ligase (357 aa).

Residues 134–339 (KQLFEHRGLP…YPDLIAKLID (206 aa)) enclose the ATP-grasp domain. 167-222 (NDKLTYPVFVKPANLGSSVGISKCNNEEELKSGITEAFQFDRKLVIEQGINAREIE) is a binding site for ATP. The Mg(2+) site is built by D293, E306, and N308.

This sequence belongs to the D-alanine--D-alanine ligase family. The cofactor is Mg(2+). Mn(2+) serves as cofactor.

Its subcellular location is the cytoplasm. The catalysed reaction is 2 D-alanine + ATP = D-alanyl-D-alanine + ADP + phosphate + H(+). Its pathway is cell wall biogenesis; peptidoglycan biosynthesis. Its function is as follows. Cell wall formation. In Staphylococcus epidermidis (strain ATCC 12228 / FDA PCI 1200), this protein is D-alanine--D-alanine ligase.